The primary structure comprises 621 residues: Endoglucanase 25 (621 aa).

The tract at residues 1–26 (MYGRDPWGGPLEINTADSATDDDRSR) is disordered. The Cytoplasmic segment spans residues 1-70 (MYGRDPWGGP…DLGCIIVSRK (70 aa)). The interval 48–49 (LL) is polarized targeting signal 1 (PTS1). Positions 59–62 (YVDL) are polarized targeting signal 2 (PTS2). A helical; Signal-anchor for type II membrane protein membrane pass occupies residues 71 to 91 (IFVWTVGTLVAAALLAGFITL). Residues 92-621 (IVKTVPRHHP…PPPPPAPWKP (530 aa)) lie on the Extracellular side of the membrane. Residues Asn108 and Asn133 are each glycosylated (N-linked (GlcNAc...) asparagine). The active-site Nucleophile is the Asp165. Asn216, Asn324, Asn345, Asn408, and Asn425 each carry an N-linked (GlcNAc...) asparagine glycan. Active-site residues include His513 and Asp561. Asn567 carries an N-linked (GlcNAc...) asparagine glycan. Glu570 is a catalytic residue.

This sequence belongs to the glycosyl hydrolase 9 (cellulase E) family. Post-translationally, glycosylated. N-glycosylation of KOR in the endoplasmic reticulum followed by N-glycan modifications in the Golgi are essential for catalytic activity. As to expression, highly expressed in roots and stems, at intermediate levels in leaves and flowers, and at lower levels in siliques. Expressed in xylem (at protein level).

Its subcellular location is the cell membrane. It carries out the reaction Endohydrolysis of (1-&gt;4)-beta-D-glucosidic linkages in cellulose, lichenin and cereal beta-D-glucans.. In terms of biological role, required for cellulose microfibril formation. Involved in cell wall assembly during cell elongation and cell plate maturation in cytokinesis. Required for secondary cell wall formation in the developing xylem. May cycle through different intracellular compartments, including plasma membrane. The sequence is that of Endoglucanase 25 (KOR) from Arabidopsis thaliana (Mouse-ear cress).